A 204-amino-acid chain; its full sequence is uncharacterized protein (204 aa).

The N-terminal stretch at 1-17 (MKRLVTGLLALSLFLAA) is a signal peptide. The tract at residues 17–100 (ACGQDSDQQK…NNNQANNNQK (84 aa)) is disordered. The N-palmitoyl cysteine moiety is linked to residue C18. C18 is lipidated: S-diacylglycerol cysteine. Basic and acidic residues predominate over residues 23–70 (DQQKDGNKEKDDKAKTEQQDKKTNDSSKDKKDNKDDSKDVNKDNKDNS). The span at 71–100 (ANDNQQQSNSNATNNDQNQTNNNQANNNQK) shows a compositional bias: low complexity.

It is found in the cell membrane. This is an uncharacterized protein from Staphylococcus aureus (strain MSSA476).